The following is a 78-amino-acid chain: Small ribosomal subunit protein bS21A (78 aa).

Residues 30–52 (MKARSAYEKPSEKRAREKGEAVR) show a composition bias toward basic and acidic residues. The segment at 30 to 78 (MKARSAYEKPSEKRAREKGEAVRRQRKLARKKLQREGLLPAPKKAVRAR) is disordered. Residues 53 to 62 (RQRKLARKKL) are compositionally biased toward basic residues.

The protein belongs to the bacterial ribosomal protein bS21 family.

This chain is Small ribosomal subunit protein bS21A, found in Rhizobium etli (strain ATCC 51251 / DSM 11541 / JCM 21823 / NBRC 15573 / CFN 42).